The chain runs to 1098 residues: Trehalose synthase complex regulatory subunit TSL1 (1098 aa).

Residues Ser-49, Ser-53, Ser-56, Ser-71, Ser-77, Ser-135, Ser-147, and Ser-161 each carry the phosphoserine modification. 3 disordered regions span residues 59 to 86 (APAPEQGVPPAISRSATRSPSAFNRASS), 129 to 168 (SVERFFSPSSNIPTDRIASPIQHEHDSGSRIASPIQQQQQ), and 192 to 244 (SQTS…PSIK). Positions 72–86 (RSATRSPSAFNRASS) are enriched in polar residues. Tandem repeats lie at residues 144–150 (RIASPIQ) and 158–164 (RIASPIQ). Positions 144 to 164 (RIASPIQHEHDSGSRIASPIQ) are 2 X 7 AA repeats of R-I-A-S-P-I-Q. Residues 213-227 (RPTSAATSLVNRTKQ) are compositionally biased toward polar residues. The segment covering 228-242 (GSASSGSSGSSAPPS) has biased composition (low complexity). Ser-229 bears the Phosphoserine mark. Phosphothreonine is present on Thr-251. Residues 274 to 297 (ADISSSETSSQHNESDPDDLTTAP) form a disordered region. Ser-303 is subject to Phosphoserine. The TPS complex domain stretch occupies residues 320–812 (GGYSNKSKLK…FNQEGSKIFK (493 aa)). Thr-815 carries the phosphothreonine modification. The disordered stretch occupies residues 1000 to 1027 (SSGQITNIQTPSQQNPSDQEQQPPASPT).

In the C-terminal section; belongs to the glycosyltransferase 20 family. The trehalose synthase complex is composed of the two catalytic subunits TPS1 and TPS2, and at least one of the two regulatory subunits TPS3 or TSL1.

The protein localises to the cytoplasm. In terms of biological role, regulatory subunit of the trehalose synthase complex that catalyzes the production of trehalose from glucose-6-phosphate and UDP-glucose in a two step process. May stabilize the trehalose synthase complex, and confer sensitivity to physiological concentrations of phosphate and to fructose 6-phosphate. This Saccharomyces cerevisiae (strain ATCC 204508 / S288c) (Baker's yeast) protein is Trehalose synthase complex regulatory subunit TSL1 (TSL1).